A 141-amino-acid polypeptide reads, in one-letter code: Small ribosomal subunit protein eS17z (141 aa).

Belongs to the eukaryotic ribosomal protein eS17 family.

The chain is Small ribosomal subunit protein eS17z (RPS17A) from Arabidopsis thaliana (Mouse-ear cress).